Consider the following 198-residue polypeptide: dITP/XTP pyrophosphatase (198 aa).

7–12 is a substrate binding site; that stretch reads THNPHK. Residues Glu-40 and Asp-69 each coordinate Mg(2+). The active-site Proton acceptor is the Asp-69. Substrate-binding positions include Thr-70, 151–154, Lys-174, and 179–180; these read FGYD and HR.

This sequence belongs to the HAM1 NTPase family. As to quaternary structure, homodimer. Mg(2+) serves as cofactor.

The catalysed reaction is XTP + H2O = XMP + diphosphate + H(+). The enzyme catalyses dITP + H2O = dIMP + diphosphate + H(+). It carries out the reaction ITP + H2O = IMP + diphosphate + H(+). Pyrophosphatase that catalyzes the hydrolysis of nucleoside triphosphates to their monophosphate derivatives, with a high preference for the non-canonical purine nucleotides XTP (xanthosine triphosphate), dITP (deoxyinosine triphosphate) and ITP. Seems to function as a house-cleaning enzyme that removes non-canonical purine nucleotides from the nucleotide pool, thus preventing their incorporation into DNA/RNA and avoiding chromosomal lesions. The polypeptide is dITP/XTP pyrophosphatase (Thermoanaerobacter pseudethanolicus (strain ATCC 33223 / 39E) (Clostridium thermohydrosulfuricum)).